The sequence spans 552 residues: Cholesterol oxidase (552 aa).

The segment at residues 1-45 (MTDSRANRADATRGVASVSRRRFLAGAGLTAGAIALSSMSTSASA) is a signal peptide (tat-type signal). Residues Tyr-66, Gly-67, Glu-86, Gly-160, Asn-164, Gly-165, Met-167, and Val-295 each contribute to the FAD site. Catalysis depends on proton acceptor residues Glu-406 and His-492. FAD contacts are provided by Gly-520 and Phe-532.

The protein belongs to the GMC oxidoreductase family. FAD is required as a cofactor. Post-translationally, predicted to be exported by the Tat system. The position of the signal peptide cleavage has been experimentally proven.

The protein localises to the secreted. The catalysed reaction is cholesterol + O2 = cholest-5-en-3-one + H2O2. The enzyme catalyses cholest-5-en-3-one = cholest-4-en-3-one. The protein operates within steroid metabolism; cholesterol degradation. Functionally, bifunctional enzyme that catalyzes the oxidation and isomerization of cholesterol to cholestenone (cholest-4-en-3-one), an initial step in the cholesterol degradation process. This Brevibacterium sterolicum protein is Cholesterol oxidase.